The primary structure comprises 393 residues: Probable RNA methyltransferase sce3898 (393 aa).

E82 serves as the catalytic Proton acceptor. The Radical SAM core domain maps to 90-329; that stretch reads RPGRYSACVS…VRSARLDAFR (240 aa). A disulfide bridge connects residues C97 and C353. [4Fe-4S] cluster-binding residues include C104, C108, and C111. S-adenosyl-L-methionine is bound by residues 157-158, 212-214, and N294; these read GE and SLG. The active-site S-methylcysteine intermediate is the C353. A disordered region spans residues 357 to 393; the sequence is ARPSAEAQRPGGRRAPPRPGATAGAADVGPSAPPRPA. The segment covering 373-382 has biased composition (low complexity); the sequence is PRPGATAGAA.

This sequence belongs to the radical SAM superfamily. RlmN family. The cofactor is [4Fe-4S] cluster.

The protein resides in the cytoplasm. This Sorangium cellulosum (strain So ce56) (Polyangium cellulosum (strain So ce56)) protein is Probable RNA methyltransferase sce3898.